A 112-amino-acid chain; its full sequence is Phosphoribosyl-ATP pyrophosphatase (112 aa).

Belongs to the PRA-PH family.

It is found in the cytoplasm. It catalyses the reaction 1-(5-phospho-beta-D-ribosyl)-ATP + H2O = 1-(5-phospho-beta-D-ribosyl)-5'-AMP + diphosphate + H(+). It functions in the pathway amino-acid biosynthesis; L-histidine biosynthesis; L-histidine from 5-phospho-alpha-D-ribose 1-diphosphate: step 2/9. In Chromohalobacter salexigens (strain ATCC BAA-138 / DSM 3043 / CIP 106854 / NCIMB 13768 / 1H11), this protein is Phosphoribosyl-ATP pyrophosphatase.